The following is a 268-amino-acid chain: tRNA threonylcarbamoyladenosine dehydratase (268 aa).

The helical transmembrane segment at 237–257 (GFGAATMVTATFGFVAVSHAL) threads the bilayer.

The protein belongs to the HesA/MoeB/ThiF family. In terms of assembly, interacts with CsdE.

Its subcellular location is the membrane. Its function is as follows. Catalyzes the ATP-dependent dehydration of threonylcarbamoyladenosine at position 37 (t(6)A37) to form cyclic t(6)A37 (ct(6)A37) in tRNAs that read codons beginning with adenine. TcdA is also part of a sulfur transfer pathway; is able to accept sulfur from CsdA directly in vitro, but CsdE might act as the sulfur donor in vivo. This chain is tRNA threonylcarbamoyladenosine dehydratase (tcdA), found in Escherichia coli (strain K12).